The following is a 497-amino-acid chain: Acetyl-coenzyme A carboxylase carboxyl transferase subunit beta, chloroplastic (497 aa).

The CoA carboxyltransferase N-terminal domain occupies 225-497 (LWVQCENCYG…LHGFLPLNQD (273 aa)). Zn(2+)-binding residues include Cys229, Cys232, Cys248, and Cys251. A C4-type zinc finger spans residues 229 to 251 (CENCYGLNYKKFFSSKMNICEYC).

This sequence belongs to the AccD/PCCB family. Acetyl-CoA carboxylase is a heterohexamer composed of biotin carboxyl carrier protein, biotin carboxylase and 2 subunits each of ACCase subunit alpha and ACCase plastid-coded subunit beta (accD). It depends on Zn(2+) as a cofactor.

The protein localises to the plastid. It localises to the chloroplast stroma. It catalyses the reaction N(6)-carboxybiotinyl-L-lysyl-[protein] + acetyl-CoA = N(6)-biotinyl-L-lysyl-[protein] + malonyl-CoA. The protein operates within lipid metabolism; malonyl-CoA biosynthesis; malonyl-CoA from acetyl-CoA: step 1/1. Functionally, component of the acetyl coenzyme A carboxylase (ACC) complex. Biotin carboxylase (BC) catalyzes the carboxylation of biotin on its carrier protein (BCCP) and then the CO(2) group is transferred by the transcarboxylase to acetyl-CoA to form malonyl-CoA. This chain is Acetyl-coenzyme A carboxylase carboxyl transferase subunit beta, chloroplastic, found in Phalaenopsis aphrodite subsp. formosana (Moth orchid).